We begin with the raw amino-acid sequence, 220 residues long: Histone H1B (220 aa).

Disordered regions lie at residues 1 to 45 (MTAT…PSAS) and 99 to 220 (QVKG…APKK). A compositionally biased stretch (low complexity) spans 28–45 (KKVAGGAKAKKPSGPSAS). Residues 40–113 (SGPSASELIV…GASGSFKLNK (74 aa)) form the H15 domain. 4 stretches are compositionally biased toward basic residues: residues 122-134 (AAKK…KAKK), 141-151 (KAPKSPKKPKK), 158-196 (SPKK…KPKT), and 204-220 (KVAK…APKK).

This sequence belongs to the histone H1/H5 family.

The protein localises to the nucleus. The protein resides in the chromosome. Histones H1 are necessary for the condensation of nucleosome chains into higher-order structures. The polypeptide is Histone H1B (Xenopus laevis (African clawed frog)).